A 212-amino-acid chain; its full sequence is Large ribosomal subunit protein uL3 (212 aa).

The tract at residues 134–155 (RNSHGNSLSHRAPGSIGQNQSP) is disordered. At glutamine 153 the chain carries N5-methylglutamine.

Belongs to the universal ribosomal protein uL3 family. As to quaternary structure, part of the 50S ribosomal subunit. Forms a cluster with proteins L14 and L19. In terms of processing, methylated by PrmB.

One of the primary rRNA binding proteins, it binds directly near the 3'-end of the 23S rRNA, where it nucleates assembly of the 50S subunit. This Pseudoalteromonas atlantica (strain T6c / ATCC BAA-1087) protein is Large ribosomal subunit protein uL3.